Consider the following 487-residue polypeptide: N-succinylglutamate 5-semialdehyde dehydrogenase (487 aa).

221 to 226 (GSSDTG) contributes to the NAD(+) binding site. Active-site residues include Glu-244 and Cys-278.

Belongs to the aldehyde dehydrogenase family. AstD subfamily.

The catalysed reaction is N-succinyl-L-glutamate 5-semialdehyde + NAD(+) + H2O = N-succinyl-L-glutamate + NADH + 2 H(+). It participates in amino-acid degradation; L-arginine degradation via AST pathway; L-glutamate and succinate from L-arginine: step 4/5. Functionally, catalyzes the NAD-dependent reduction of succinylglutamate semialdehyde into succinylglutamate. In Burkholderia ambifaria (strain MC40-6), this protein is N-succinylglutamate 5-semialdehyde dehydrogenase.